Reading from the N-terminus, the 567-residue chain is Urease subunit alpha (567 aa).

3 residues coordinate Ni(2+): histidine 134, histidine 136, and lysine 217. Lysine 217 carries the N6-carboxylysine modification. Histidine 219 is a substrate binding site. Ni(2+) contacts are provided by histidine 246 and histidine 272. Histidine 320 acts as the Proton donor in catalysis. A Ni(2+)-binding site is contributed by aspartate 360.

Belongs to the metallo-dependent hydrolases superfamily. Urease alpha subunit family. In terms of assembly, heterotrimer of UreA (gamma), UreB (beta) and UreC (alpha) subunits. Three heterotrimers associate to form the active enzyme. Ni cation is required as a cofactor. In terms of processing, carboxylation allows a single lysine to coordinate two nickel ions.

Its subcellular location is the cytoplasm. It carries out the reaction urea + 2 H2O + H(+) = hydrogencarbonate + 2 NH4(+). Its pathway is nitrogen metabolism; urea degradation; CO(2) and NH(3) from urea (urease route): step 1/1. The chain is Urease subunit alpha from Polynucleobacter asymbioticus (strain DSM 18221 / CIP 109841 / QLW-P1DMWA-1) (Polynucleobacter necessarius subsp. asymbioticus).